A 1115-amino-acid polypeptide reads, in one-letter code: Lateral signaling target protein 2 homolog (1115 aa).

Disordered stretches follow at residues 308 to 488 (PLGS…DSDS), 545 to 586 (SEDD…PSTS), 600 to 742 (RLPS…SLSD), and 879 to 1027 (VQSS…PDGK). A compositionally biased stretch (low complexity) spans 322–361 (NNSSSTTNTSNNNNNNTNNNNSSSGSDCTNNDKTGTTTNT). The span at 363 to 373 (KPVERLVDHRN) shows a compositional bias: basic and acidic residues. Composition is skewed to low complexity over residues 374-417 (NNTT…TPTA) and 425-444 (PSHS…NSPA). Residues 449 to 488 (YDDDDEDDDDDDVHADVEEDEDESGILDSDEHDLNDDSDS) show a composition bias toward acidic residues. Low complexity-rich tracts occupy residues 558–577 (QQQQ…QQQQ) and 600–614 (RLPS…SSNN). Phosphoserine is present on residues serine 603 and serine 604. Residues 615-628 (QQMTIKSPSEQTTT) show a composition bias toward polar residues. Residues 632–655 (SNRHRHHSHHHHHHHHSHHHHHHQ) are compositionally biased toward basic residues. Positions 658 to 676 (AAVAVAAAQDEQHNNNQPH) are enriched in low complexity. Positions 677–706 (SHSHSSSHHHHHNHQSHSHPHRANRSTRKR) are enriched in basic residues. Low complexity-rich tracts occupy residues 714–726 (TITT…GGEQ), 733–742 (DSSTASSLSD), and 881–901 (SSNS…AARS). Serine 908 carries the phosphoserine modification. Composition is skewed to low complexity over residues 921 to 975 (QQQQ…SPVS) and 988 to 1020 (TTTT…MSPP). Residues 1025 to 1085 (DGKAPRCMSC…VCRECFMREV (61 aa)) form an FYVE-type zinc finger. Positions 1031, 1034, 1047, 1050, 1055, 1058, 1077, and 1080 each coordinate Zn(2+). A disordered region spans residues 1088-1115 (SHSHGQSQSQIHSPTQQAGGRPQAASAS). Low complexity predominate over residues 1090–1100 (SHGQSQSQIHS).

This sequence belongs to the lst-2 family.

Its function is as follows. Negative regulator of epidermal growth factor receptor (EGFR) signaling. The chain is Lateral signaling target protein 2 homolog from Drosophila grimshawi (Hawaiian fruit fly).